We begin with the raw amino-acid sequence, 228 residues long: Protein-L-isoaspartate O-methyltransferase (228 aa).

The active site involves Ser74.

This sequence belongs to the methyltransferase superfamily. L-isoaspartyl/D-aspartyl protein methyltransferase family.

It is found in the cytoplasm. It carries out the reaction [protein]-L-isoaspartate + S-adenosyl-L-methionine = [protein]-L-isoaspartate alpha-methyl ester + S-adenosyl-L-homocysteine. Catalyzes the methyl esterification of L-isoaspartyl residues in peptides and proteins that result from spontaneous decomposition of normal L-aspartyl and L-asparaginyl residues. It plays a role in the repair and/or degradation of damaged proteins. This chain is Protein-L-isoaspartate O-methyltransferase, found in Methylorubrum extorquens (strain PA1) (Methylobacterium extorquens).